The sequence spans 71 residues: Large ribosomal subunit protein bL31 (71 aa).

Residues cysteine 16, cysteine 18, cysteine 37, and cysteine 40 each contribute to the Zn(2+) site.

The protein belongs to the bacterial ribosomal protein bL31 family. Type A subfamily. As to quaternary structure, part of the 50S ribosomal subunit. Zn(2+) serves as cofactor.

In terms of biological role, binds the 23S rRNA. This is Large ribosomal subunit protein bL31 from Pseudoalteromonas atlantica (strain T6c / ATCC BAA-1087).